The primary structure comprises 438 residues: uncharacterized protein (438 aa).

Histidine 59 lines the Zn(2+) pocket. Glutamate 62 serves as the catalytic Proton acceptor. The Zn(2+) site is built by histidine 63 and glutamate 139.

The protein belongs to the peptidase M16 family. The cofactor is Zn(2+).

This is an uncharacterized protein from Mycobacterium bovis (strain ATCC BAA-935 / AF2122/97).